The sequence spans 491 residues: Aspartyl/glutamyl-tRNA(Asn/Gln) amidotransferase subunit B (491 aa).

This sequence belongs to the GatB/GatE family. GatB subfamily. In terms of assembly, heterotrimer of A, B and C subunits.

The catalysed reaction is L-glutamyl-tRNA(Gln) + L-glutamine + ATP + H2O = L-glutaminyl-tRNA(Gln) + L-glutamate + ADP + phosphate + H(+). It catalyses the reaction L-aspartyl-tRNA(Asn) + L-glutamine + ATP + H2O = L-asparaginyl-tRNA(Asn) + L-glutamate + ADP + phosphate + 2 H(+). Functionally, allows the formation of correctly charged Asn-tRNA(Asn) or Gln-tRNA(Gln) through the transamidation of misacylated Asp-tRNA(Asn) or Glu-tRNA(Gln) in organisms which lack either or both of asparaginyl-tRNA or glutaminyl-tRNA synthetases. The reaction takes place in the presence of glutamine and ATP through an activated phospho-Asp-tRNA(Asn) or phospho-Glu-tRNA(Gln). In Nostoc punctiforme (strain ATCC 29133 / PCC 73102), this protein is Aspartyl/glutamyl-tRNA(Asn/Gln) amidotransferase subunit B.